We begin with the raw amino-acid sequence, 217 residues long: Octanoyltransferase (217 aa).

In terms of domain architecture, BPL/LPL catalytic spans Ser32–Gln207. Substrate contacts are provided by residues Arg71–His78, Ser138–Gly140, and Gly151–Ala153. Cys169 acts as the Acyl-thioester intermediate in catalysis.

The protein belongs to the LipB family.

Its subcellular location is the cytoplasm. The catalysed reaction is octanoyl-[ACP] + L-lysyl-[protein] = N(6)-octanoyl-L-lysyl-[protein] + holo-[ACP] + H(+). It participates in protein modification; protein lipoylation via endogenous pathway; protein N(6)-(lipoyl)lysine from octanoyl-[acyl-carrier-protein]: step 1/2. Its function is as follows. Catalyzes the transfer of endogenously produced octanoic acid from octanoyl-acyl-carrier-protein onto the lipoyl domains of lipoate-dependent enzymes. Lipoyl-ACP can also act as a substrate although octanoyl-ACP is likely to be the physiological substrate. This Shewanella sp. (strain ANA-3) protein is Octanoyltransferase.